The chain runs to 3722 residues: MSGMQWSFGFSCLFFLKTVWICQAFDADTPDPRVLSLDLTLVCSDDKSKQATLISYPVTFKGHVIKDMQIFCKNGWMQMTRGRGINMIRIHYPQTYTSVVPGACVFRGPYSVPTNDSIEMYNVSVALLWSDGTPTYESLECNVTKSQASNAPEPKASPTSSTPQPEAASHNQSKLIDWDVFCSQNENIPAKFISRLVAPKCLAVEKMDVDCSNGLVPITHEHGFNMMLIQYTRNKLLDSPGMCVFWGPYSVPKNDTVVLYTVTARLKWSEGPPTDLSIQCYMPKSPDAPKPESCLSSPPEPEASPSSNAPEPETYPTSSAPEKVSSDQPAPSHNQSKLIDWDVYCSQDESIPAKFISRLVTSKDQALEKTEINCSNGLVPITQEFGINMMLIQYTRNELLDSPGMCVFWGPYSVPKNDTVVLYTVTARLKWSEGPPTNLSIQCYMPKSPVAPKPETGPTSNAPEPETYPTSSAPEKVSSDQPAPSHNQSKLIDWDVYCSQNESIPAKFISRLVTSKDQALEKTEINCSNGLVPITQEFGINMMLIQYTRNELLDSPGMCVFWGPYSVPKNDTVVLYTVTARLKWSEGPPTNLSIECYMPKSPVAPKPETGPTSNAPEPETYPTSSAPEKVSSDQPAPSHNQSKLIDWDVYCSQNESIPAKFISRLVTSKDQALEKTEINCSNGLVPITQEFGINMMLIQYTRNELLDSPGMCVFWGPYSVPKNDTVVLYTVTARLKWSEGPPTNLSIECYMPKSPVAPKPETGPSSNAPEPETYPTSSAPEKVSSDQPAPSHNQSKLIDWDVYCSQNESIPAKFISRLVTSKDQALEKTEINCSNGLVPITQEFGINMMLIQYTRNELLDSPGMCVFWGPYSVPKNDTVVLYTVTARLKWSEGPPTNLSIECYMPKSPVAPKPETGPTSNAPEPETYPTSSAPEKVSSDQPAPSHNQSKLIDWDVYCSQNESIPAKFISRLVTSKDQALEKTEINCSNGLVPITHEFGINMMLIQYTRNELLDSPGMCVFWGPYSVPKNDTVVLYTVTARLKWSEGPPTNLSIECYMPKSPVAPKPETGPTSNAPEPETYPTSSAPEKVSSDQPAPSHNQSKLIDWDVYCSQNESIPAKFISRLVTSKDQALEKTEINCSNGLVPITQEFGINMMLIQYTRNELLDSPGMCVFWGPYSVPKNDTVVLYTVTARLKWSEGPPTNLSIECYMPKSPVAPKPETGPTSNAPEPETYPTSSAPEKVSSDQPAPSHNQSKLIDWDVYCSQNESIPAKFISRLVTSKDQALEKTEINCSNGLVPITHKFGINMMLIQYTRNELLDSPGMCVFWGPYSVPKNDTVVLYTVTARLKWSEGPPTNLSIECYMPKSPVAHKPETGPTSNAPEPETYPTSSAPEKVSSDQPAPSHNQSKLIDWDVYCSQNESIPAKFISLVTSKDQALEKTEINCSNGLVPITHEFGINMMLIQYTRNELLDSPGMCVFWGPYSVPKNDTVVLYTVTARLKWSEGPPTNLPIECYMPKSPVAPKPETGPSSNAPEPETYPTSSAPEKVYSDQPAPSHNQSKLIDWDVYCSQNESIPAKFISRLVTSKDQALEKTEINCSNGLVPITHEFGINMMLIQYTRNELLDSPGMCVFWGPYSVPKNDTVVLYTVTARLKWSEGPPTNLSIECYMPKSPVAPKPETGPTSNAPEPQTYPTSSAPEKVSSDQPAPSHNQSKLIDWDVYCSQNESIPAKFISRLVTSKDQALEKTEINCSNGLVPITQEFGINMMLIQYTRNELLDSPGMCVFWGPYSVPKNDTVVLYTVTARLKWSEGPPTNLSIECYMPKSPVAPKPETGPTSNAPEPETYPTSSAPEKVSSDQPAPSHNQSKLIDWDVYCSQNESIPAKFISRLVTSKDQALEKTEINCSNGLVPITHEFGINMMLIQYTRNELLDSPGMCVFWGPYSVPKNDTVVLYTVTARLKWSEGPPTNLSIECYMPKSPVAPKPETGPTSNAPEPETYPTSSAPEKVSSDQPAPSHNQSKLIDWDVYCSQNESFPAKFISRLVTSKDQALEKTEINCSNGLVPITQEFGINMMLIQYTRNELLDSPGMCVFWGPYSVPKNDTVVLYTVTARLKWSEGPPTNLSIECYMPKSPVAPKPETGPTSNAPEPETYPTSSAPEKVSSDQPAPSHNQSKLIDWDVYCSQNESIPAKFISRLVTSKDQALEKTEINCSNGLVPITQEFGINMMLIQYTRNELLDSPGMCVFWGPYSVPKNDTVVLYTVTARLKWSEGPPTNLSIECYMPKSPVAPKPETGPTSNAPEPETYPTSSAPEKVSSDQPAPSHNQSKLIDWDVYCSQNESIPAKFISRLVTSKDQALEKTEINCSNGLVPITQEFGINMMLIQYTRNELLDSPGMCVFWGPYSVPKNDTVVLYTVTARLKWSEGPPTNLSIECYMPKSPVAPKPETGPTSNAPEPETYPTSSAPEKVSSDQPAPSHNQSKLIDWDVYCSQNESFPAKFISRLVTSKDQALEKTEINCSNGLVPITQEFGINMMLIQYTRNELLDSPGMCVFWGPYSVPKNDTVVLYTVTARLKWSEGPPTNLSIECYMPKSPVAPKPETGPTSNAPEPQTYPTSSAPEKVSSDQPAPSHNQSKLIDWDVYCSQNESIPAKFISRLVTSKDQALEKTEINCSNGLVPITQEFGINMMLIQYTRNELLDSPGMCVFWGPYSVPKNDTVVLYTVTARLKWSEGPPTNLSIECYMPKSPVAPKPETGPTSNAPEPETYPTSSAPEKVSSDQPAPSHNQSKLIDWDVYCSQNESFPAKFISRLVTSKDQALEKTEINCSNGLVPITHEFGINMMLIQYTRNELLDSPGMCVFWGPYSVPKNDTVVLYTVTARLKWSEGPPTNLSIECYMPKSPVAPKPETGPTSNAPEPQTYPTSSAPEKVSSDQPAPSHNQSKLIDWDVYCSQNESFPAKFISRLVTSKDQALEKTEINCSNGLVPITQEFGINMMLIQYTRNELLDSPGMCVFWGPYSVPKNDTVVLYTVTARLKWSEGPPTNLSIECYMPKSPVAPKPETGPTSNAPEPETYPTSSAPEKVSSDQPAPSHNQSKLIDWDVYCSQNESIPAKFISRLVTSKDQALEKTEINCSNGLVPITQEFGINMMLIQYTRNELLDSPGMCVFWGPYSVPKNDTVVLYTVTARLKWSEGPPTNLSIECYMPKSPVAPKPETYPTSSAPEKVSSDQPAPSHNQSKLIDWDVYCSQNESIPAKFISRLVTSKDQALEKTEINCSNGLVPITHEFGINMMLIQYTRNELLDSPGMCVFWGPYSVPKNDTVVLYTVTARLKWSEGPPTNLSIECYMPKSPVAPKPEASPTSNAPEPQTYPTSSAPGTSPEGSATAAPGTSPEGNTTAARNAYPRKSNQTTSTEDVLDDTSNYIIKVIPHCRTRGDVALIEIITDVDLSAVAVCSNGSRHHFNSTDFVHFYLPVSYNFTPSVCAFTRSKANLFKLHIGVSWKDRLHDVTTQKKDFLITCTFDPHKSHRGPTSASSEPLIAAKEIQSHQGPQSDAEEVFLKLVDIRNETLAAAVPLSKKVRLVGEVHGSSLESGLKPVACDAVGVQQGQRYTILRDGCGDGIVFAKDIGFITEGNKAFSPVFEVFKLHGNLHLTFMCNFTLCSHSCDGSSCSNQRRTRRSMAWQDIPHVADFDSSATPSTDMATVQVALLVAVALLITQLAGLAIYVNIN.

An N-terminal signal peptide occupies residues 1 to 24 (MSGMQWSFGFSCLFFLKTVWICQA). Over 25–3698 (FDADTPDPRV…TPSTDMATVQ (3674 aa)) the chain is Extracellular. Disulfide bonds link C43-C141 and C72-C104. A VERL 1 repeat occupies 77–155 (MQMTRGRGIN…SQASNAPEPK (79 aa)). 3 N-linked (GlcNAc...) asparagine glycosylation sites follow: N115, N122, and N142. The disordered stretch occupies residues 146–169 (SQASNAPEPKASPTSSTPQPEAAS). The segment covering 157-169 (SPTSSTPQPEAAS) has biased composition (polar residues). N171 carries N-linked (GlcNAc...) asparagine glycosylation. 2 disulfide bridges follow: C182–C280 and C211–C243. One copy of the VERL 2 repeat lies at 216 to 293 (VPITHEHGFN…KSPDAPKPES (78 aa)). N254 carries an N-linked (GlcNAc...) asparagine glycan. The segment at 279–335 (QCYMPKSPDAPKPESCLSSPPEPEASPSSNAPEPETYPTSSAPEKVSSDQPAPSHNQ) is disordered. Residues 291–312 (PESCLSSPPEPEASPSSNAPEP) are compositionally biased toward low complexity. A compositionally biased stretch (polar residues) spans 315-335 (YPTSSAPEKVSSDQPAPSHNQ). 2 N-linked (GlcNAc...) asparagine glycosylation sites follow: N334 and N373. 2 cysteine pairs are disulfide-bonded: C345–C443 and C374–C406. One copy of the VERL 3 repeat lies at 379 to 455 (VPITQEFGIN…PKSPVAPKPE (77 aa)). N-linked (GlcNAc...) asparagine glycans are attached at residues N417, N438, N487, N501, N526, N570, N591, N640, N654, N679, N723, N744, N793, N807, N832, N876, N897, N946, N960, N985, N1029, N1050, N1099, N1113, N1138, N1182, N1203, N1252, N1266, N1291, N1335, N1356, N1405, N1419, N1443, and N1487. The disordered stretch occupies residues 443-488 (CYMPKSPVAPKPETGPTSNAPEPETYPTSSAPEKVSSDQPAPSHNQ). Polar residues predominate over residues 457-488 (GPTSNAPEPETYPTSSAPEKVSSDQPAPSHNQ). A VERL 4 repeat occupies 532–608 (VPITQEFGIN…PKSPVAPKPE (77 aa)). The disordered stretch occupies residues 603–641 (VAPKPETGPTSNAPEPETYPTSSAPEKVSSDQPAPSHNQ). Polar residues predominate over residues 610–641 (GPTSNAPEPETYPTSSAPEKVSSDQPAPSHNQ). One copy of the VERL 5 repeat lies at 685-761 (VPITQEFGIN…PKSPVAPKPE (77 aa)). Residues 756-794 (VAPKPETGPSSNAPEPETYPTSSAPEKVSSDQPAPSHNQ) are disordered. Positions 763–794 (GPSSNAPEPETYPTSSAPEKVSSDQPAPSHNQ) are enriched in polar residues. A VERL 6 repeat occupies 838-914 (VPITQEFGIN…PKSPVAPKPE (77 aa)). The disordered stretch occupies residues 909-947 (VAPKPETGPTSNAPEPETYPTSSAPEKVSSDQPAPSHNQ). A compositionally biased stretch (polar residues) spans 916-947 (GPTSNAPEPETYPTSSAPEKVSSDQPAPSHNQ). One copy of the VERL 7 repeat lies at 991–1067 (VPITHEFGIN…PKSPVAPKPE (77 aa)). The disordered stretch occupies residues 1062–1100 (VAPKPETGPTSNAPEPETYPTSSAPEKVSSDQPAPSHNQ). Residues 1069 to 1100 (GPTSNAPEPETYPTSSAPEKVSSDQPAPSHNQ) are compositionally biased toward polar residues. Residues 1144 to 1220 (VPITQEFGIN…PKSPVAPKPE (77 aa)) form a VERL 8 repeat. The segment at 1215–1253 (VAPKPETGPTSNAPEPETYPTSSAPEKVSSDQPAPSHNQ) is disordered. Over residues 1222 to 1253 (GPTSNAPEPETYPTSSAPEKVSSDQPAPSHNQ) the composition is skewed to polar residues. One copy of the VERL 9 repeat lies at 1297–1373 (VPITHKFGIN…PKSPVAHKPE (77 aa)). Residues 1368-1406 (VAHKPETGPTSNAPEPETYPTSSAPEKVSSDQPAPSHNQ) form a disordered region. Over residues 1375–1406 (GPTSNAPEPETYPTSSAPEKVSSDQPAPSHNQ) the composition is skewed to polar residues. The stretch at 1449–1525 (VPITHEFGIN…PKSPVAPKPE (77 aa)) is one VERL 10 repeat. The segment at 1519-1556 (PVAPKPETGPSSNAPEPETYPTSSAPEKVYSDQPAPSH) is disordered. Residues 1527 to 1543 (GPSSNAPEPETYPTSSA) show a composition bias toward polar residues. N1557, N1571, N1596, N1640, N1661, N1710, N1724, N1749, N1793, N1814, N1863, N1877, N1902, N1946, N1967, N2016, N2030, N2055, N2099, N2120, N2169, N2183, N2208, N2252, N2273, N2322, N2336, N2361, N2405, N2426, N2475, N2489, N2514, N2558, N2579, N2628, N2642, N2667, N2711, N2732, N2781, N2795, N2820, N2864, N2885, N2934, N2948, N2973, N3017, N3038, N3087, N3101, N3126, N3170, N3191, N3229, N3243, N3268, N3312, and N3333 each carry an N-linked (GlcNAc...) asparagine glycan. One copy of the VERL 11 repeat lies at 1602–1678 (VPITHEFGIN…PKSPVAPKPE (77 aa)). Positions 1672–1711 (PVAPKPETGPTSNAPEPQTYPTSSAPEKVSSDQPAPSHNQ) are disordered. The segment covering 1680–1711 (GPTSNAPEPQTYPTSSAPEKVSSDQPAPSHNQ) has biased composition (polar residues). Residues 1755-1831 (VPITQEFGIN…PKSPVAPKPE (77 aa)) form a VERL 12 repeat. Residues 1826-1864 (VAPKPETGPTSNAPEPETYPTSSAPEKVSSDQPAPSHNQ) form a disordered region. A compositionally biased stretch (polar residues) spans 1833–1864 (GPTSNAPEPETYPTSSAPEKVSSDQPAPSHNQ). The stretch at 1908 to 1984 (VPITHEFGIN…PKSPVAPKPE (77 aa)) is one VERL 13 repeat. The tract at residues 1979–2017 (VAPKPETGPTSNAPEPETYPTSSAPEKVSSDQPAPSHNQ) is disordered. A compositionally biased stretch (polar residues) spans 1986–2017 (GPTSNAPEPETYPTSSAPEKVSSDQPAPSHNQ). A VERL 14 repeat occupies 2061-2137 (VPITQEFGIN…PKSPVAPKPE (77 aa)). A disordered region spans residues 2132–2170 (VAPKPETGPTSNAPEPETYPTSSAPEKVSSDQPAPSHNQ). Residues 2139–2170 (GPTSNAPEPETYPTSSAPEKVSSDQPAPSHNQ) are compositionally biased toward polar residues. The VERL 15 repeat unit spans residues 2214–2290 (VPITQEFGIN…PKSPVAPKPE (77 aa)). A disordered region spans residues 2285–2323 (VAPKPETGPTSNAPEPETYPTSSAPEKVSSDQPAPSHNQ). Residues 2292 to 2323 (GPTSNAPEPETYPTSSAPEKVSSDQPAPSHNQ) are compositionally biased toward polar residues. The stretch at 2367 to 2443 (VPITQEFGIN…PKSPVAPKPE (77 aa)) is one VERL 16 repeat. A disordered region spans residues 2438–2476 (VAPKPETGPTSNAPEPETYPTSSAPEKVSSDQPAPSHNQ). Positions 2445–2476 (GPTSNAPEPETYPTSSAPEKVSSDQPAPSHNQ) are enriched in polar residues. One copy of the VERL 17 repeat lies at 2520–2596 (VPITQEFGIN…PKSPVAPKPE (77 aa)). Residues 2590 to 2629 (PVAPKPETGPTSNAPEPQTYPTSSAPEKVSSDQPAPSHNQ) form a disordered region. Polar residues predominate over residues 2598 to 2629 (GPTSNAPEPQTYPTSSAPEKVSSDQPAPSHNQ). The stretch at 2673–2749 (VPITQEFGIN…PKSPVAPKPE (77 aa)) is one VERL 18 repeat. The segment at 2744 to 2782 (VAPKPETGPTSNAPEPETYPTSSAPEKVSSDQPAPSHNQ) is disordered. A compositionally biased stretch (polar residues) spans 2751-2782 (GPTSNAPEPETYPTSSAPEKVSSDQPAPSHNQ). One copy of the VERL 19 repeat lies at 2826–2902 (VPITHEFGIN…PKSPVAPKPE (77 aa)). Residues 2897-2935 (VAPKPETGPTSNAPEPQTYPTSSAPEKVSSDQPAPSHNQ) are disordered. Over residues 2904–2935 (GPTSNAPEPQTYPTSSAPEKVSSDQPAPSHNQ) the composition is skewed to polar residues. One copy of the VERL 20 repeat lies at 2979–3055 (VPITQEFGIN…PKSPVAPKPE (77 aa)). Residues 3050-3088 (VAPKPETGPTSNAPEPETYPTSSAPEKVSSDQPAPSHNQ) are disordered. Over residues 3057-3088 (GPTSNAPEPETYPTSSAPEKVSSDQPAPSHNQ) the composition is skewed to polar residues. A VERL 21 repeat occupies 3132–3208 (VPITQEFGIN…PKSPVAPKPE (77 aa)). The tract at residues 3205-3230 (PKPETYPTSSAPEKVSSDQPAPSHNQ) is disordered. The span at 3210–3230 (YPTSSAPEKVSSDQPAPSHNQ) shows a compositional bias: polar residues. One copy of the VERL 22 repeat lies at 3274–3351 (VPITHEFGIN…KSPVAPKPEA (78 aa)). The disordered stretch occupies residues 3345-3407 (VAPKPEASPT…RKSNQTTSTE (63 aa)). A compositionally biased stretch (polar residues) spans 3352 to 3375 (SPTSNAPEPQTYPTSSAPGTSPEG). Residues N3388, N3401, N3449, N3456, N3559, and N3650 are each glycosylated (N-linked (GlcNAc...) asparagine). In terms of domain architecture, ZP spans 3408–3670 (DVLDDTSNYI…SSCSNQRRTR (263 aa)). The helical transmembrane segment at 3699-3719 (VALLVAVALLITQLAGLAIYV) threads the bilayer. The Cytoplasmic portion of the chain corresponds to 3720–3722 (NIN).

May form disulfide-linked homodimers. Interacts (via VERL repeats) with sperm lysin. Each VERL chain can bind numerous lysin molecules. Post-translationally, N-glycosylated. About half of the glycoprotein mass corresponds to carbohydrate chains. N-glycosylation is not required for lysin binding. O-glycosylated. O-glycosylation is not required for lysin binding.

Its subcellular location is the cell membrane. It is found in the secreted. The protein localises to the extracellular space. It localises to the extracellular matrix. Functionally, structural component of the egg vitelline envelope; forms long filaments. Functions as a species-specific receptor for the sperm protein lysin; prevents fertilization by sperm from other species. Each VERL chain can bind multiple copies of the sperm protein lysin; this creates a 3 um hole in the egg vitelline envelope through which the sperm passes. The chain is Vitelline envelope sperm lysin receptor from Haliotis rufescens (California red abalone).